We begin with the raw amino-acid sequence, 247 residues long: DNA polymerase sliding clamp (247 aa).

Belongs to the PCNA family. Homotrimer. The subunits circularize to form a toroid; DNA passes through its center. Replication factor C (RFC) is required to load the toroid on the DNA.

Sliding clamp subunit that acts as a moving platform for DNA processing. Responsible for tethering the catalytic subunit of DNA polymerase and other proteins to DNA during high-speed replication. This chain is DNA polymerase sliding clamp, found in Methanoregula boonei (strain DSM 21154 / JCM 14090 / 6A8).